Here is a 554-residue protein sequence, read N- to C-terminus: MAYYRTPHDVTALPAWQALQQHRDAMQDFSMREAFAADSKRFDEFSLSCCGLFLDYSKNLINEQSRDLLVQLAEQVGLQDAIKSMFSGEIINASEGRPVLHTALRRPVGDKLSVNGVNVMPEVHKVLNQITELVGRIHDGLWRGYSEKPITDVVNIGIGGSFLGPELVSEALLPYAQRGVRCHYLANIDGSEFHELSANLRAETTLFIVSSKSFNTLETLKNAMAARTWYLAQGGSEAELYRHFIAVSSNKAAAVAFGIREENIFPMWDWVGGRYSLWSAIGLPIALAIGTANFKELLSGAYTMDQHFQTAPFEKNMPVLLALLGVWYGNFWGARSHAILPYDHYLRNITKHLQQLDMESNGKSVLTDGTPVKTDTGPVIWGGVGCNGQHAYHQLLHQGTQLIPADFIVPVVSFNPVADHHQWLYANCLSQSQALMLGKTREEAEAELRQKGLNEADIEKLAPHKVIPGNRPSNTLVVERISPRRLGALVAMYEHKVFVQSVIWGINAFDQWGVELGKELGKGVYQRIVGSLEDSAEDGSTQGLINYFRGRHRG.

Glu359 (proton donor) is an active-site residue. Catalysis depends on residues His390 and Lys518.

This sequence belongs to the GPI family.

It localises to the cytoplasm. It catalyses the reaction alpha-D-glucose 6-phosphate = beta-D-fructose 6-phosphate. It participates in carbohydrate biosynthesis; gluconeogenesis. It functions in the pathway carbohydrate degradation; glycolysis; D-glyceraldehyde 3-phosphate and glycerone phosphate from D-glucose: step 2/4. Functionally, catalyzes the reversible isomerization of glucose-6-phosphate to fructose-6-phosphate. The sequence is that of Glucose-6-phosphate isomerase from Pseudomonas putida (strain W619).